Consider the following 332-residue polypeptide: Biotin synthase (332 aa).

The Radical SAM core domain maps to 53-282 (HFGKKVKLNM…TKEIRISGGR (230 aa)). [4Fe-4S] cluster is bound by residues cysteine 71, cysteine 75, and cysteine 78. 4 residues coordinate [2Fe-2S] cluster: cysteine 115, cysteine 147, cysteine 207, and arginine 277.

It belongs to the radical SAM superfamily. Biotin synthase family. As to quaternary structure, homodimer. [4Fe-4S] cluster serves as cofactor. It depends on [2Fe-2S] cluster as a cofactor.

The catalysed reaction is (4R,5S)-dethiobiotin + (sulfur carrier)-SH + 2 reduced [2Fe-2S]-[ferredoxin] + 2 S-adenosyl-L-methionine = (sulfur carrier)-H + biotin + 2 5'-deoxyadenosine + 2 L-methionine + 2 oxidized [2Fe-2S]-[ferredoxin]. It functions in the pathway cofactor biosynthesis; biotin biosynthesis; biotin from 7,8-diaminononanoate: step 2/2. Its function is as follows. Catalyzes the conversion of dethiobiotin (DTB) to biotin by the insertion of a sulfur atom into dethiobiotin via a radical-based mechanism. This is Biotin synthase from Bacillus cereus (strain B4264).